Here is a 658-residue protein sequence, read N- to C-terminus: Protein teflon (658 aa).

A C2H2-type 1 zinc finger spans residues 33-56; the sequence is LYCHFCRDLFTQLPEFLRHLQGAH. Disordered regions lie at residues 78–127 and 151–175; these read EQDD…SEQK and HINN…SESN. The segment covering 100–111 has biased composition (basic and acidic residues); the sequence is IPAKSEDSRAID. Positions 118–127 are enriched in polar residues; the sequence is DNSPVKSEQK. The C2H2-type 2; degenerate zinc-finger motif lies at 608–630; it reads YFCKCCDDIFTLNEDYTRHLVSQ. Residues 634–657 form a C2H2-type 3 zinc finger; the sequence is YQCTKCIKAFKYRGHFEKHLQNVH.

Belongs to the Teflon family.

It is found in the nucleus. The protein localises to the chromosome. Functionally, specifically required in males for proper segregation of autosomal bivalents at meiosis I. Expression is required in the male germ line prior to spermatocyte stage S4. May have a role as a bridging molecule maintaining adhesion to hold autosome bivalents together via heterochromatic connections. This is Protein teflon from Drosophila erecta (Fruit fly).